We begin with the raw amino-acid sequence, 89 residues long: 10 kDa fusion protein (89 aa).

The tract at residues 1-29 (MDENDGENLLTQPDDTGNSTNGVYAAGAP) is disordered. Residues 9 to 22 (LLTQPDDTGNSTNG) are compositionally biased toward polar residues. N-linked (GlcNAc...) asparagine; by host glycosylation is present at Asn18.

The protein belongs to the poxviruses fusion protein family. As to quaternary structure, homotrimer, covalently linked.

The protein resides in the virion membrane. The protein is 10 kDa fusion protein of Capra hircus (Goat).